The sequence spans 442 residues: tRNA-2-methylthio-N(6)-dimethylallyladenosine synthase (442 aa).

In terms of domain architecture, MTTase N-terminal spans 2–120 (KKVFIRTFGC…LPKMIVDKET (119 aa)). 6 residues coordinate [4Fe-4S] cluster: Cys-11, Cys-49, Cys-83, Cys-157, Cys-161, and Cys-164. In terms of domain architecture, Radical SAM core spans 143 to 375 (RVEGGAAFVS…NEVIEAETAR (233 aa)). A TRAM domain is found at 378-441 (QTMIGTVQRC…TFSLRGKIVE (64 aa)).

Belongs to the methylthiotransferase family. MiaB subfamily. As to quaternary structure, monomer. The cofactor is [4Fe-4S] cluster.

It localises to the cytoplasm. The enzyme catalyses N(6)-dimethylallyladenosine(37) in tRNA + (sulfur carrier)-SH + AH2 + 2 S-adenosyl-L-methionine = 2-methylsulfanyl-N(6)-dimethylallyladenosine(37) in tRNA + (sulfur carrier)-H + 5'-deoxyadenosine + L-methionine + A + S-adenosyl-L-homocysteine + 2 H(+). Catalyzes the methylthiolation of N6-(dimethylallyl)adenosine (i(6)A), leading to the formation of 2-methylthio-N6-(dimethylallyl)adenosine (ms(2)i(6)A) at position 37 in tRNAs that read codons beginning with uridine. In Neisseria gonorrhoeae (strain ATCC 700825 / FA 1090), this protein is tRNA-2-methylthio-N(6)-dimethylallyladenosine synthase.